Reading from the N-terminus, the 219-residue chain is NADH-quinone oxidoreductase subunit C (219 aa).

It belongs to the complex I 30 kDa subunit family. As to quaternary structure, NDH-1 is composed of 14 different subunits. Subunits NuoB, C, D, E, F, and G constitute the peripheral sector of the complex.

The protein resides in the cell inner membrane. It catalyses the reaction a quinone + NADH + 5 H(+)(in) = a quinol + NAD(+) + 4 H(+)(out). Its function is as follows. NDH-1 shuttles electrons from NADH, via FMN and iron-sulfur (Fe-S) centers, to quinones in the respiratory chain. The immediate electron acceptor for the enzyme in this species is believed to be ubiquinone. Couples the redox reaction to proton translocation (for every two electrons transferred, four hydrogen ions are translocated across the cytoplasmic membrane), and thus conserves the redox energy in a proton gradient. The sequence is that of NADH-quinone oxidoreductase subunit C from Methylorubrum extorquens (strain PA1) (Methylobacterium extorquens).